Consider the following 391-residue polypeptide: MDYYDVLGVSKTASPEEIKKSYRKLAVKYHPDKNPGDAEAEKRFKEVSEAYEVLSDPQKRESYDRYGKDGPFAGAGGFGGAGMSNMEDALRTFMGAFGGELGGSGSFFEGLFGGLGEAFGMRGDPAGARQGASKKVHITLTFEEAARGVKKELLVSGYKTCETCSGSGASSKQGIKCCDRCKGSGQVVQSRGFFSMASTCPECGGEGRMITDPCSSCRGQGRIKDKRSVHVQIPAGVDSGMRLKMEGYGDAGQNGAPAGDLYVFIDVEAHPVFERRGDDLILELPIGFVDAALGMKKEVPTLLKEGACRLTVPEGIQSGTILKIKNQGFPNVHGRGRGDLLVRVSVETPQNLSEEQKELLRKFAATEKAENFPKKRSFLDKIKGFFSDLTV.

The 66-residue stretch at Asp2 to Gly67 folds into the J domain. The CR-type zinc-finger motif lies at Gly148 to Lys226. Zn(2+)-binding residues include Cys161, Cys164, Cys178, Cys181, Cys200, Cys203, Cys214, and Cys217. CXXCXGXG motif repeat units follow at residues Cys161–Gly168, Cys178–Gly185, Cys200–Gly207, and Cys214–Gly221.

This sequence belongs to the DnaJ family. As to quaternary structure, homodimer. The cofactor is Zn(2+).

The protein localises to the cytoplasm. Participates actively in the response to hyperosmotic and heat shock by preventing the aggregation of stress-denatured proteins and by disaggregating proteins, also in an autonomous, DnaK-independent fashion. Unfolded proteins bind initially to DnaJ; upon interaction with the DnaJ-bound protein, DnaK hydrolyzes its bound ATP, resulting in the formation of a stable complex. GrpE releases ADP from DnaK; ATP binding to DnaK triggers the release of the substrate protein, thus completing the reaction cycle. Several rounds of ATP-dependent interactions between DnaJ, DnaK and GrpE are required for fully efficient folding. Also involved, together with DnaK and GrpE, in the DNA replication of plasmids through activation of initiation proteins. The protein is Chaperone protein DnaJ of Chlamydia abortus (strain DSM 27085 / S26/3) (Chlamydophila abortus).